A 394-amino-acid chain; its full sequence is Phosphopentomutase (394 aa).

Residues aspartate 13, aspartate 286, histidine 291, aspartate 327, histidine 328, and histidine 339 each coordinate Mn(2+).

This sequence belongs to the phosphopentomutase family. Mn(2+) is required as a cofactor.

The protein resides in the cytoplasm. It catalyses the reaction 2-deoxy-alpha-D-ribose 1-phosphate = 2-deoxy-D-ribose 5-phosphate. The catalysed reaction is alpha-D-ribose 1-phosphate = D-ribose 5-phosphate. It participates in carbohydrate degradation; 2-deoxy-D-ribose 1-phosphate degradation; D-glyceraldehyde 3-phosphate and acetaldehyde from 2-deoxy-alpha-D-ribose 1-phosphate: step 1/2. Functionally, isomerase that catalyzes the conversion of deoxy-ribose 1-phosphate (dRib-1-P) and ribose 1-phosphate (Rib-1-P) to deoxy-ribose 5-phosphate (dRib-5-P) and ribose 5-phosphate (Rib-5-P), respectively. In Bacillus cereus (strain AH187), this protein is Phosphopentomutase.